The primary structure comprises 64 residues: Large ribosomal subunit protein bL35 (64 aa).

Over residues 1 to 15 (MPKNKTHSGTAKRFR) the composition is skewed to basic residues. A disordered region spans residues 1–27 (MPKNKTHSGTAKRFRVTGSGKLRREQA).

This sequence belongs to the bacterial ribosomal protein bL35 family.

This Saccharopolyspora erythraea (strain ATCC 11635 / DSM 40517 / JCM 4748 / NBRC 13426 / NCIMB 8594 / NRRL 2338) protein is Large ribosomal subunit protein bL35.